A 222-amino-acid chain; its full sequence is Histidine biosynthesis bifunctional protein HisIE (222 aa).

Positions 1 to 128 (MQPLSPAFID…SLTLPPPMDA (128 aa)) are phosphoribosyl-AMP cyclohydrolase. Positions 129–222 (CSELFRVIDQ…ANRRGAPRRN (94 aa)) are phosphoribosyl-ATP pyrophosphohydrolase.

In the N-terminal section; belongs to the PRA-CH family. It in the C-terminal section; belongs to the PRA-PH family.

It is found in the cytoplasm. The catalysed reaction is 1-(5-phospho-beta-D-ribosyl)-ATP + H2O = 1-(5-phospho-beta-D-ribosyl)-5'-AMP + diphosphate + H(+). It carries out the reaction 1-(5-phospho-beta-D-ribosyl)-5'-AMP + H2O = 1-(5-phospho-beta-D-ribosyl)-5-[(5-phospho-beta-D-ribosylamino)methylideneamino]imidazole-4-carboxamide. Its pathway is amino-acid biosynthesis; L-histidine biosynthesis; L-histidine from 5-phospho-alpha-D-ribose 1-diphosphate: step 2/9. It functions in the pathway amino-acid biosynthesis; L-histidine biosynthesis; L-histidine from 5-phospho-alpha-D-ribose 1-diphosphate: step 3/9. This chain is Histidine biosynthesis bifunctional protein HisIE, found in Prochlorococcus marinus (strain MIT 9313).